The sequence spans 87 residues: Small ribosomal subunit protein uS17 (87 aa).

It belongs to the universal ribosomal protein uS17 family. Part of the 30S ribosomal subunit.

Its function is as follows. One of the primary rRNA binding proteins, it binds specifically to the 5'-end of 16S ribosomal RNA. In Staphylococcus carnosus (strain TM300), this protein is Small ribosomal subunit protein uS17.